A 107-amino-acid polypeptide reads, in one-letter code: MTEKKNRREKKNPREAKITFEGLVMEALPNGMFRVRLENDTIILGYISGKIRSSSIRILMGDRVKIEVSRYDSSKGRIIYRLPHKDSKRTEDSKDTEDLKDTKDSKG.

An S1-like domain is found at 8–83 (REKKNPREAK…SKGRIIYRLP (76 aa)). The segment at 81 to 107 (RLPHKDSKRTEDSKDTEDLKDTKDSKG) is disordered. Residues 83–107 (PHKDSKRTEDSKDTEDLKDTKDSKG) are compositionally biased toward basic and acidic residues.

The protein belongs to the IF-1 family. Component of the 30S ribosomal translation pre-initiation complex which assembles on the 30S ribosome in the order IF-2 and IF-3, IF-1 and N-formylmethionyl-tRNA(fMet); mRNA recruitment can occur at any time during PIC assembly.

It is found in the plastid. The protein resides in the chloroplast. Its function is as follows. One of the essential components for the initiation of protein synthesis. Stabilizes the binding of IF-2 and IF-3 on the 30S subunit to which N-formylmethionyl-tRNA(fMet) subsequently binds. Helps modulate mRNA selection, yielding the 30S pre-initiation complex (PIC). Upon addition of the 50S ribosomal subunit IF-1, IF-2 and IF-3 are released leaving the mature 70S translation initiation complex. This chain is Translation initiation factor IF-1, chloroplastic, found in Oryza sativa subsp. indica (Rice).